The chain runs to 619 residues: Zinc finger CCCH domain-containing protein 67 (619 aa).

ANK repeat units follow at residues 52 to 81 and 88 to 120; these read EPLTPLMVAAVYGSVGCLDALLSPPYLVDP and SLSTPLHLAAAGGSASAPAAVSRLLAAGADPAL. 2 C3H1-type zinc fingers span residues 213 to 241 and 249 to 273; these read HYSCVPCPEFKKGAGCRRGDMCEYAHGVF and QYRTRLCKDGVGCARRVCFFAHTPD. Residues 308-341 are disordered; the sequence is SPGSSSFTPPLSPSAGGGGGGGGGSGGGGAWPQQ. Gly residues predominate over residues 322–337; sequence AGGGGGGGGGSGGGGA.

This chain is Zinc finger CCCH domain-containing protein 67, found in Oryza sativa subsp. japonica (Rice).